Consider the following 216-residue polypeptide: ADP-sugar pyrophosphatase (216 aa).

Methionine 1 bears the N-acetylmethionine mark. 2 positions are modified to phosphoserine: serine 3 and serine 10. Tryptophan 28 lines the substrate pocket. Lysine 42 participates in a covalent cross-link: Glycyl lysine isopeptide (Lys-Gly) (interchain with G-Cter in SUMO2). Threonine 45 bears the Phosphothreonine mark. Substrate contacts are provided by residues 46–47 and arginine 51; that span reads WE. Residues 57-194 form the Nudix hydrolase domain; the sequence is QTADGVAVIP…EEHLTVDARV (138 aa). Tyrosine 74 is modified (phosphotyrosine). Arginine 84 lines the substrate pocket. Alanine 96 contacts Mg(2+). Positions 97–118 match the Nudix box motif; that stretch reads GLIDDGETPEAAALRELEEETG. Leucine 98 contacts substrate. Mg(2+)-binding residues include glutamate 112 and glutamate 116. Aspartate 133 lines the substrate pocket. Glutamate 163 lines the Mg(2+) pocket. N6-acetyllysine occurs at positions 207 and 215.

It belongs to the Nudix hydrolase family. Homodimer. Interacts with PARG. Requires Mg(2+) as cofactor. In terms of processing, phosphorylation at Thr-45 is required for homodimer stability; dephosphorylation results in destabilization of the homodimer. Dephosphorylation at Thr-45 promotes the ATP-synthesis activity.

The protein resides in the nucleus. The catalysed reaction is D-ribose 5-phosphate + ATP + H(+) = ADP-D-ribose + diphosphate. The enzyme catalyses ADP-D-ribose + H2O = D-ribose 5-phosphate + AMP + 2 H(+). It catalyses the reaction 8-oxo-dGDP + H2O = 8-oxo-dGMP + phosphate + H(+). Its function is as follows. Enzyme that can either act as an ADP-sugar pyrophosphatase in absence of diphosphate or catalyze the synthesis of ATP in presence of diphosphate. In absence of diphosphate, hydrolyzes with similar activities various modified nucleoside diphosphates such as ADP-ribose, ADP-mannose, ADP-glucose, 8-oxo-GDP and 8-oxo-dGDP. Can also hydrolyze other nucleotide sugars with low activity. In presence of diphosphate, mediates the synthesis of ATP in the nucleus by catalyzing the conversion of ADP-ribose to ATP and ribose 5-phosphate. Nuclear ATP synthesis takes place when dephosphorylated at Thr-45. Nuclear ATP generation is required for extensive chromatin remodeling events that are energy-consuming. Does not play a role in U8 snoRNA decapping activity. Binds U8 snoRNA. In Pongo abelii (Sumatran orangutan), this protein is ADP-sugar pyrophosphatase.